The sequence spans 542 residues: CTP synthase (542 aa).

The amidoligase domain stretch occupies residues 1 to 265 (MTRYVFITGG…DREILAHFQM (265 aa)). Ser13 is a CTP binding site. Ser13 lines the UTP pocket. Residues 14–19 (SLGKGL) and Asp71 contribute to the ATP site. 2 residues coordinate Mg(2+): Asp71 and Glu139. CTP is bound by residues 146-148 (DIE), 186-191 (KTKPTQ), and Lys222. UTP contacts are provided by residues 186–191 (KTKPTQ) and Lys222. 238–240 (RDV) lines the ATP pocket. A Glutamine amidotransferase type-1 domain is found at 291 to 541 (TIAIVGKYTG…IAAAIDQSRL (251 aa)). An L-glutamine-binding site is contributed by Gly353. Cys380 serves as the catalytic Nucleophile; for glutamine hydrolysis. L-glutamine contacts are provided by residues 381 to 384 (FGMQ), Glu404, and Arg469. Catalysis depends on residues His514 and Glu516.

Belongs to the CTP synthase family. As to quaternary structure, homotetramer.

It carries out the reaction UTP + L-glutamine + ATP + H2O = CTP + L-glutamate + ADP + phosphate + 2 H(+). It catalyses the reaction L-glutamine + H2O = L-glutamate + NH4(+). The catalysed reaction is UTP + NH4(+) + ATP = CTP + ADP + phosphate + 2 H(+). It participates in pyrimidine metabolism; CTP biosynthesis via de novo pathway; CTP from UDP: step 2/2. Allosterically activated by GTP, when glutamine is the substrate; GTP has no effect on the reaction when ammonia is the substrate. The allosteric effector GTP functions by stabilizing the protein conformation that binds the tetrahedral intermediate(s) formed during glutamine hydrolysis. Inhibited by the product CTP, via allosteric rather than competitive inhibition. Functionally, catalyzes the ATP-dependent amination of UTP to CTP with either L-glutamine or ammonia as the source of nitrogen. Regulates intracellular CTP levels through interactions with the four ribonucleotide triphosphates. The chain is CTP synthase from Methylorubrum extorquens (strain CM4 / NCIMB 13688) (Methylobacterium extorquens).